Consider the following 435-residue polypeptide: Serine--tRNA ligase (435 aa).

Positions 48–68 (MKAQRNEASKKIGEAKRNGES) are disordered. Over residues 49 to 68 (KAQRNEASKKIGEAKRNGES) the composition is skewed to basic and acidic residues. An L-serine-binding site is contributed by 230–232 (TAE). 261–263 (RSE) contributes to the ATP binding site. Position 284 (glutamate 284) interacts with L-serine. Residue 348-351 (EVSS) coordinates ATP. Serine 383 provides a ligand contact to L-serine.

Belongs to the class-II aminoacyl-tRNA synthetase family. Type-1 seryl-tRNA synthetase subfamily. As to quaternary structure, homodimer. The tRNA molecule binds across the dimer.

The protein resides in the cytoplasm. It carries out the reaction tRNA(Ser) + L-serine + ATP = L-seryl-tRNA(Ser) + AMP + diphosphate + H(+). It catalyses the reaction tRNA(Sec) + L-serine + ATP = L-seryl-tRNA(Sec) + AMP + diphosphate + H(+). Its pathway is aminoacyl-tRNA biosynthesis; selenocysteinyl-tRNA(Sec) biosynthesis; L-seryl-tRNA(Sec) from L-serine and tRNA(Sec): step 1/1. Catalyzes the attachment of serine to tRNA(Ser). Is also able to aminoacylate tRNA(Sec) with serine, to form the misacylated tRNA L-seryl-tRNA(Sec), which will be further converted into selenocysteinyl-tRNA(Sec). This Limosilactobacillus reuteri (strain DSM 20016) (Lactobacillus reuteri) protein is Serine--tRNA ligase.